A 164-amino-acid polypeptide reads, in one-letter code: MFMNSMLRVSRQRAAVRSTVSLYRGFVSASIRRNEQNVVKAAAQELANAKEPSDLIGPGGRDGEVPTDLEQATGLERYELLSELSGRDAFDMKPLDASRKGTLTDPIMVTSLDPYRHIGCTGSPSGSHNLIWMTVYKDKLRRCPECGSVYKLKFMGDPNAEHSH.

A mitochondrion-targeting transit peptide spans 1-33 (MFMNSMLRVSRQRAAVRSTVSLYRGFVSASIRR). Residues Cys120, His128, Cys143, and Cys146 each coordinate Zn(2+).

Belongs to the cytochrome c oxidase subunit 5B family. Component of the cytochrome c oxidase (complex IV, CIV), a multisubunit enzyme composed of a catalytic core of 3 subunits and several supernumerary subunits. The complex exists as a monomer or a dimer and forms supercomplexes (SCs) in the inner mitochondrial membrane with ubiquinol-cytochrome c oxidoreductase (cytochrome b-c1 complex, complex III, CIII).

It is found in the mitochondrion inner membrane. It functions in the pathway energy metabolism; oxidative phosphorylation. Its function is as follows. Component of the cytochrome c oxidase, the last enzyme in the mitochondrial electron transport chain which drives oxidative phosphorylation. The respiratory chain contains 3 multisubunit complexes succinate dehydrogenase (complex II, CII), ubiquinol-cytochrome c oxidoreductase (cytochrome b-c1 complex, complex III, CIII) and cytochrome c oxidase (complex IV, CIV), that cooperate to transfer electrons derived from NADH and succinate to molecular oxygen, creating an electrochemical gradient over the inner membrane that drives transmembrane transport and the ATP synthase. Cytochrome c oxidase is the component of the respiratory chain that catalyzes the reduction of oxygen to water. Electrons originating from reduced cytochrome c in the intermembrane space (IMS) are transferred via the dinuclear copper A center (CU(A)) of subunit 2 and heme A of subunit 1 to the active site in subunit 1, a binuclear center (BNC) formed by heme A3 and copper B (CU(B)). The BNC reduces molecular oxygen to 2 water molecules using 4 electrons from cytochrome c in the IMS and 4 protons from the mitochondrial matrix. This chain is Cytochrome c oxidase subunit 4, mitochondrial (cox4), found in Schizosaccharomyces pombe (strain 972 / ATCC 24843) (Fission yeast).